The chain runs to 697 residues: PAN2-PAN3 deadenylation complex subunit PAN3 (697 aa).

The C3H1-type zinc finger occupies 7 to 36 (TAKDTLCKNILIYGYCKYENKGCAFSHNRQ). Positions 40–67 (QQQQATNTSNNSTSVITPNSANSTASSA) are disordered. 2 short sequence motifs (PABPC-interacting motif-2 (PAM-2)) span residues 69–89 (LSSK…VSNL) and 106–126 (FKPE…TQRP). Residues 106–240 (FKPENGVSEP…SAPTPGSETP (135 aa)) form a disordered region. The segment covering 119-153 (DSPTTQRPFTSKRFNVSTPSFTPTNFDFANNSNAD) has biased composition (polar residues). Over residues 172–187 (QNQQQQQQQQQQQQKQ) the composition is skewed to low complexity. Positions 212 to 224 (GVSQSSPSTNPYF) are enriched in polar residues. The pseudokinase domain stretch occupies residues 308–576 (QSLSHSNLPE…DLNEFSQRLT (269 aa)). Residues arginine 361, 416-423 (DYYPNSIS), and 470-471 (SK) contribute to the ATP site. Residues 577-615 (PKMFNIIDSLQNSSDFIEGQLTSELENARLFRLMTKLNY) adopt a coiled-coil conformation. The knob domain stretch occupies residues 616–697 (LIHDNSNSEN…IDTKFRLMRE (82 aa)).

It belongs to the protein kinase superfamily. PAN3 family. Homodimer. Forms a heterotrimer with a catalytic subunit PAN2 to form the poly(A)-nuclease (PAN) deadenylation complex. Interacts (via PAM-2 motif) with poly(A)-binding protein PAB1 (via PABC domain), conferring substrate specificity of the enzyme complex.

The protein resides in the cytoplasm. Functionally, regulatory subunit of the poly(A)-nuclease (PAN) deadenylation complex, one of two cytoplasmic mRNA deadenylases involved in mRNA turnover. PAN specifically shortens poly(A) tails of RNA and the activity is stimulated by poly(A)-binding protein PAB1. PAN deadenylation is followed by rapid degradation of the shortened mRNA tails by the CCR4-NOT complex. Deadenylated mRNAs are then degraded by two alternative mechanisms, namely exosome-mediated 3'-5' exonucleolytic degradation, or deadenylation-dependent mRNA decaping and subsequent 5'-3' exonucleolytic degradation by XRN1. May also be involved in post-transcriptional maturation of mRNA poly(A) tails. PAN3 acts as a positive regulator for PAN activity, recruiting the catalytic subunit PAN2 to mRNA via its interaction with RNA and with PAB1. The sequence is that of PAN2-PAN3 deadenylation complex subunit PAN3 from Candida albicans (strain SC5314 / ATCC MYA-2876) (Yeast).